Reading from the N-terminus, the 1312-residue chain is Kinesin-like protein KIF16B (1312 aa).

The region spanning 3–358 (SVKVAVRVRP…LRYANRAKNI (356 aa)) is the Kinesin motor domain. 102 to 109 (GQTGSGKS) contributes to the ATP binding site. Positions 366–425 (EDANVKLIRELRAEIARLKTLLAQGNQIALLDSPTALSMEEKLHQNEARVQELTKEWTNK) form a coiled coil. Ser398 is subject to Phosphoserine. The FHA domain maps to 480–544 (VGREDASTEQ…LNQGAVILLG (65 aa)). Thr577 carries the phosphothreonine modification. Phosphoserine is present on residues Ser582, Ser838, Ser1047, and Ser1145. Coiled coils occupy residues 835–913 (KLAS…LQNH) and 941–1073 (QVEK…KQKI). A PX domain is found at 1177 to 1291 (DPIKISIPRY…KVGLTLSKHT (115 aa)).

This sequence belongs to the TRAFAC class myosin-kinesin ATPase superfamily. Kinesin family. As to quaternary structure, interacts with PTPN21. Interacts with RAB14.

The protein resides in the cytoplasm. It is found in the cytoskeleton. Its subcellular location is the early endosome membrane. The protein localises to the spindle. Functionally, plus end-directed microtubule-dependent motor protein involved in endosome transport and receptor recycling and degradation. Regulates the plus end motility of early endosomes and the balance between recycling and degradation of receptors such as EGF receptor (EGFR) and FGF receptor (FGFR). Regulates the Golgi to endosome transport of FGFR-containing vesicles during early development, a key process for developing basement membrane and epiblast and primitive endoderm lineages during early postimplantation development. The sequence is that of Kinesin-like protein KIF16B (Kif16b) from Mus musculus (Mouse).